The sequence spans 902 residues: Probable polyribonucleotide nucleotidyltransferase 1, chloroplastic (902 aa).

A chloroplast-targeting transit peptide spans 1 to 66; the sequence is MLATPGALHH…RRRAAGARVR (66 aa). The segment covering 44–53 has biased composition (low complexity); that stretch reads VAASASTSRR. Residues 44–93 form a disordered region; that stretch reads VAASASTSRRGGARRRAAGARVRASVGEEAPPVVTEEASTSGGPTKFSTK. The span at 80 to 91 shows a compositional bias: polar residues; the sequence is EASTSGGPTKFS. The KH domain occupies 693 to 753; it reads PLIHVMKVKP…SSLEKSKAII (61 aa). The S1 motif domain maps to 763–832; it reads GEIYRNCEIK…DKGQLRLSSR (70 aa). The tract at residues 833–902 is disordered; it reads ALLPDANQES…ASQGSEMGTE (70 aa). A compositionally biased stretch (polar residues) spans 839–850; sequence NQESSSKQQAGG. Residues 852-862 are compositionally biased toward basic and acidic residues; it reads TREKAPQKDNL. Low complexity predominate over residues 877–888; that stretch reads EASTAENNATAS.

The protein belongs to the polyribonucleotide nucleotidyltransferase family.

The protein resides in the plastid. It is found in the chloroplast. The enzyme catalyses RNA(n+1) + phosphate = RNA(n) + a ribonucleoside 5'-diphosphate. Functionally, involved in the metabolism of all major classes of plastid RNAs. Required for efficient 3'-end processing of mRNAs and 3'-end maturation of rRNA transcripts, but is not sufficient to mediate their degradation. Mediates tRNA degradation. May function as a poly(A) mRNA 3'-5' degrading phosphorylase. The chain is Probable polyribonucleotide nucleotidyltransferase 1, chloroplastic (PNP1) from Oryza sativa subsp. japonica (Rice).